Reading from the N-terminus, the 837-residue chain is Tuftelin-interacting protein 11 (837 aa).

Composition is skewed to basic and acidic residues over residues M1–R13 and V53–P64. 3 disordered regions span residues M1–R21, V53–R72, and L85–A133. A phosphoserine mark is found at S2, S59, and S98. Positions E91–E102 are enriched in acidic residues. A compositionally biased stretch (basic and acidic residues) spans R103–P116. S144 is subject to Phosphoserine. The 47-residue stretch at T149–S195 folds into the G-patch domain. Residues I179–P236 are disordered. A Phosphoserine modification is found at S210. Positions V700–N705 match the Nuclear localization signal motif. A required for nuclear speckle localization region spans residues I710–L734.

It belongs to the TFP11/STIP family. Identified in the spliceosome C complex. Found in the Intron Large (IL) complex, a post-mRNA release spliceosomal complex containing the excised intron, U2, U5 and U6 snRNPs, and splicing factors. Interacts with TUFT1. Interacts with DHX15; indicative for a recruitment of DHX15 to the IL complex. Interacts with GCFC2.

The protein localises to the cytoplasm. It is found in the nucleus. Its function is as follows. Involved in pre-mRNA splicing, specifically in spliceosome disassembly during late-stage splicing events. Intron turnover seems to proceed through reactions in two lariat-intron associated complexes termed Intron Large (IL) and Intron Small (IS). In cooperation with DHX15 seems to mediate the transition of the U2, U5 and U6 snRNP-containing IL complex to the snRNP-free IS complex leading to efficient debranching and turnover of excised introns. May play a role in the differentiation of ameloblasts and odontoblasts or in the forming of the enamel extracellular matrix. The chain is Tuftelin-interacting protein 11 (TFIP11) from Macaca fascicularis (Crab-eating macaque).